Here is a 407-residue protein sequence, read N- to C-terminus: ATP phosphoribosyltransferase regulatory subunit (407 aa).

Belongs to the class-II aminoacyl-tRNA synthetase family. HisZ subfamily. In terms of assembly, heteromultimer composed of HisG and HisZ subunits.

The protein resides in the cytoplasm. It participates in amino-acid biosynthesis; L-histidine biosynthesis; L-histidine from 5-phospho-alpha-D-ribose 1-diphosphate: step 1/9. In terms of biological role, required for the first step of histidine biosynthesis. May allow the feedback regulation of ATP phosphoribosyltransferase activity by histidine. This chain is ATP phosphoribosyltransferase regulatory subunit, found in Rippkaea orientalis (strain PCC 8801 / RF-1) (Cyanothece sp. (strain PCC 8801)).